Consider the following 345-residue polypeptide: Beta-hexosaminidase (345 aa).

Residues Asp-60, Arg-68, Arg-132, and 162–163 (KH) contribute to the substrate site. His-175 functions as the Proton donor/acceptor in the catalytic mechanism. Asp-247 acts as the Nucleophile in catalysis.

The protein belongs to the glycosyl hydrolase 3 family. NagZ subfamily.

Its subcellular location is the cytoplasm. The enzyme catalyses Hydrolysis of terminal non-reducing N-acetyl-D-hexosamine residues in N-acetyl-beta-D-hexosaminides.. Its pathway is cell wall biogenesis; peptidoglycan recycling. Functionally, plays a role in peptidoglycan recycling by cleaving the terminal beta-1,4-linked N-acetylglucosamine (GlcNAc) from peptide-linked peptidoglycan fragments, giving rise to free GlcNAc, anhydro-N-acetylmuramic acid and anhydro-N-acetylmuramic acid-linked peptides. This is Beta-hexosaminidase from Actinobacillus pleuropneumoniae serotype 3 (strain JL03).